The following is a 279-amino-acid chain: Large ribosomal subunit protein uL2 (279 aa).

Disordered stretches follow at residues 34–55 and 221–279; these read LAPL…RHKG and RGMA…RKAK. Residues 40–55 show a composition bias toward basic residues; that stretch reads SGGRNRAGRITSRHKG. Over residues 232 to 242 the composition is skewed to gly residues; sequence MGGGEGRSKSG. Positions 259–279 are enriched in basic residues; it reads LKTRNKKKASSKLIVRGRKAK.

This sequence belongs to the universal ribosomal protein uL2 family. Part of the 50S ribosomal subunit. Forms a bridge to the 30S subunit in the 70S ribosome.

Its function is as follows. One of the primary rRNA binding proteins. Required for association of the 30S and 50S subunits to form the 70S ribosome, for tRNA binding and peptide bond formation. It has been suggested to have peptidyltransferase activity; this is somewhat controversial. Makes several contacts with the 16S rRNA in the 70S ribosome. The polypeptide is Large ribosomal subunit protein uL2 (Chlorobium phaeobacteroides (strain BS1)).